The chain runs to 39 residues: Alpha-conotoxin ArIA (39 aa).

A propeptide spanning residues serine 1–threonine 17 is cleaved from the precursor. 2 disulfide bridges follow: cysteine 22–cysteine 28 and cysteine 23–cysteine 36. Residues serine 24–proline 26 are ser-Xaa-Pro motif, crucial for potent interaction with nAChR. Proline 33 carries the 4-hydroxyproline; in ArIA modification.

Belongs to the conotoxin A superfamily. Expressed by the venom duct.

It is found in the secreted. Functionally, alpha-conotoxins act on postsynaptic membranes, they bind to the nicotinic acetylcholine receptors (nAChR) and thus inhibit them. This toxin acts as a competitive inhibitor and is 3-fold more potent on alpha-7/CHRNA7 nAChRs (IC(50)=6 nM) than on alpha-3-beta-2/CHRNA3-CHRNB2 nAChR (IC(50)=18 nM). Acts as a competitive inhibitor and is 33-fold more potent on alpha-7/CHRNA7 nAChRs (IC(50)=1.8 nM) than on alpha-3-beta-2/CHRNA3-CHRNB2 nAChR (IC(50)=60.1 nM). This Conus arenatus (Sand-dusted cone) protein is Alpha-conotoxin ArIA.